A 135-amino-acid polypeptide reads, in one-letter code: Large ribosomal subunit protein uL15 (135 aa).

A disordered region spans residues 21-66 (VGRGQGSGMGKTATRGGKGQTARTGYKAKRGFEGGQQPLQRRLPKI).

Belongs to the universal ribosomal protein uL15 family. Part of the 50S ribosomal subunit.

Binds to the 23S rRNA. The protein is Large ribosomal subunit protein uL15 of Helicobacter pylori (strain HPAG1).